A 32-amino-acid chain; its full sequence is Photosystem II reaction center protein T (32 aa).

The helical transmembrane segment at 3 to 23 (ALVYTFLLIGTLIVIFFAVFF) threads the bilayer.

Belongs to the PsbT family. PSII is composed of 1 copy each of membrane proteins PsbA, PsbB, PsbC, PsbD, PsbE, PsbF, PsbH, PsbI, PsbJ, PsbK, PsbL, PsbM, PsbT, PsbX, PsbY, PsbZ, Psb30/Ycf12, at least 3 peripheral proteins of the oxygen-evolving complex and a large number of cofactors. It forms dimeric complexes.

It is found in the plastid. The protein resides in the chloroplast thylakoid membrane. Its function is as follows. Found at the monomer-monomer interface of the photosystem II (PS II) dimer, plays a role in assembly and dimerization of PSII. PSII is a light-driven water plastoquinone oxidoreductase, using light energy to abstract electrons from H(2)O, generating a proton gradient subsequently used for ATP formation. The chain is Photosystem II reaction center protein T from Phaeodactylum tricornutum (strain CCAP 1055/1).